Consider the following 166-residue polypeptide: Sperm-egg fusion protein TMEM95 (166 aa).

The N-terminal stretch at 1–16 (MWTLALGGIFLAAVEA) is a signal peptide. 4 cysteine pairs are disulfide-bonded: Cys17/Cys118, Cys20/Cys121, Cys105/Cys128, and Cys109/Cys134. Over 17–145 (CVFCRFPDRE…PGSHDLWEAR (129 aa)) the chain is Extracellular. Residue Asn117 is glycosylated (N-linked (GlcNAc...) asparagine). A helical membrane pass occupies residues 146–165 (ILLLFVCGTALLLGVPSLAV). Residue Glu166 is a topological domain, cytoplasmic.

It belongs to the TMEM95 family. Does not interact with sperm-egg fusion proteins IZUMO1 or IZUMO1R/JUNO. N-glycosylated. Detected in testis and brain with higher levels in brain than testis.

The protein localises to the cytoplasmic vesicle. It is found in the secretory vesicle. Its subcellular location is the acrosome membrane. Functionally, sperm protein required for fusion of sperm with the egg membrane during fertilization. This chain is Sperm-egg fusion protein TMEM95, found in Bos taurus (Bovine).